Consider the following 178-residue polypeptide: Protein GrpE (178 aa).

Residues 1–11 (MENTQENPTDQ) show a composition bias toward polar residues. Residues 1–31 (MENTQENPTDQTTEETGREAQAAENAAPAAE) form a disordered region. The span at 19 to 31 (EAQAAENAAPAAE) shows a compositional bias: low complexity.

This sequence belongs to the GrpE family. Homodimer.

It localises to the cytoplasm. Functionally, participates actively in the response to hyperosmotic and heat shock by preventing the aggregation of stress-denatured proteins, in association with DnaK and GrpE. It is the nucleotide exchange factor for DnaK and may function as a thermosensor. Unfolded proteins bind initially to DnaJ; upon interaction with the DnaJ-bound protein, DnaK hydrolyzes its bound ATP, resulting in the formation of a stable complex. GrpE releases ADP from DnaK; ATP binding to DnaK triggers the release of the substrate protein, thus completing the reaction cycle. Several rounds of ATP-dependent interactions between DnaJ, DnaK and GrpE are required for fully efficient folding. This Burkholderia thailandensis (strain ATCC 700388 / DSM 13276 / CCUG 48851 / CIP 106301 / E264) protein is Protein GrpE.